The chain runs to 142 residues: Transcriptional regulator MraZ (142 aa).

2 consecutive SpoVT-AbrB domains span residues 5-47 (EYPY…PLPG) and 76-119 (ASKA…NPQR).

Belongs to the MraZ family. As to quaternary structure, forms oligomers.

Its subcellular location is the cytoplasm. The protein resides in the nucleoid. In Deinococcus radiodurans (strain ATCC 13939 / DSM 20539 / JCM 16871 / CCUG 27074 / LMG 4051 / NBRC 15346 / NCIMB 9279 / VKM B-1422 / R1), this protein is Transcriptional regulator MraZ.